The primary structure comprises 514 residues: RNA-splicing ligase RtcB homolog (514 aa).

Positions 128, 131, 236, 268, and 362 each coordinate Mn(2+). Position 235–239 (235–239) interacts with GMP; the sequence is NHYAE. Residues 362–363, 411–414, S418, 437–440, and K513 each bind GMP; these read HN, GGTM, and HGAG. H437 (GMP-histidine intermediate) is an active-site residue.

This sequence belongs to the RtcB family. As to quaternary structure, catalytic component of the tRNA-splicing ligase complex. Requires Mn(2+) as cofactor.

The catalysed reaction is a 3'-end 3'-phospho-ribonucleotide-RNA + a 5'-end dephospho-ribonucleoside-RNA + GTP = a ribonucleotidyl-ribonucleotide-RNA + GMP + diphosphate. It carries out the reaction a 3'-end 2',3'-cyclophospho-ribonucleotide-RNA + a 5'-end dephospho-ribonucleoside-RNA + GTP + H2O = a ribonucleotidyl-ribonucleotide-RNA + GMP + diphosphate + H(+). In terms of biological role, catalytic subunit of the tRNA-splicing ligase complex that acts by directly joining spliced tRNA halves to mature-sized tRNAs by incorporating the precursor-derived splice junction phosphate into the mature tRNA as a canonical 3',5'-phosphodiester. May act as an RNA ligase with broad substrate specificity, and may function toward other RNAs. The polypeptide is RNA-splicing ligase RtcB homolog (Ostreococcus lucimarinus (strain CCE9901)).